Here is a 263-residue protein sequence, read N- to C-terminus: MKISQLFLGLVACSTAFAYAGIDGISSNESNIKIGAAANASHPGGVAAVSVQAAGAPYNAFTGFSSLKGLAQAFAAQGTSNTNVTVGSKTFNISHIPVSAMPPSHSALGNFNFGQVGTQEVYFGEWWKAGDTPASASHTVYYAGDNTNTTVPTAGTATYTVAGINGSASNLLSGTFTANYGAGTLEGTLTGTGTAVSSLSLDGVAFNPGTAAFAGLATANGTAGVDNSGVVQGQFFGANASALAGIAQFDNVSYNTAFGGAKN.

Positions 1 to 20 (MKISQLFLGLVACSTAFAYA) are cleaved as a signal peptide. The heme b site is built by His-42, Tyr-58, Ser-104, and His-105.

As to quaternary structure, monomer in solution. Interacts with host hemoglobin.

It is found in the secreted. Part of a high affinity heme acquisition system. Functions as a hemophore that acquires heme from human hemoglobin and delivers the heme to its cognate receptor, HphR, facilitating transport of heme across the bacterial outer membrane. Apo HphA interacts specifically with human hemoglobin and steals heme through a passive process probably due to its high affinity for heme. It can also acquire heme complexed to human serum albumin. Plays a supporting role for full virulence, acting as an accessory factor that enhances the process of heme uptake. The sequence is that of Hemophilin from Acinetobacter baumannii.